The chain runs to 210 residues: Dynein regulatory complex protein 12 (210 aa).

Residues 1-23 form a disordered region; that stretch reads MPPKNKEKGKKSGAQKKKKNWGA. Basic residues predominate over residues 7 to 20; it reads EKGKKSGAQKKKKN. Residues 49–161 adopt a coiled-coil conformation; it reads RDEARRAKAS…EAKYEEILHD (113 aa). A disordered region spans residues 188–210; sequence HKEQQRQFGLTPPGSLRPPAPSL.

It belongs to the DRC12 family. Component of the nexin-dynein regulatory complex (N-DRC).

It is found in the cytoplasm. The protein resides in the cytoskeleton. Its subcellular location is the flagellum axoneme. Component of the nexin-dynein regulatory complex (N-DRC), a key regulator of ciliary/flagellar motility which maintains the alignment and integrity of the distal axoneme and regulates microtubule sliding in motile axonemes. In Homo sapiens (Human), this protein is Dynein regulatory complex protein 12.